A 369-amino-acid chain; its full sequence is Porin-like protein BUsg_347 (369 aa).

The signal sequence occupies residues 1–23 (MKNHKSLAILIPMLFAGSTAVNA).

Belongs to the Gram-negative porin family. As to quaternary structure, homotrimer.

The protein localises to the cell outer membrane. Functionally, forms pores that allow passive diffusion of small molecules across the membrane. The protein is Porin-like protein BUsg_347 of Buchnera aphidicola subsp. Schizaphis graminum (strain Sg).